Consider the following 219-residue polypeptide: Octanoyltransferase (219 aa).

Residues 31 to 206 (TASADEIWLV…ECLRLMKASA (176 aa)) enclose the BPL/LPL catalytic domain. Residues 70–77 (RGGQVTFH), 137–139 (SLG), and 150–152 (GLA) contribute to the substrate site. The Acyl-thioester intermediate role is filled by Cys-168.

The protein belongs to the LipB family.

It is found in the cytoplasm. The enzyme catalyses octanoyl-[ACP] + L-lysyl-[protein] = N(6)-octanoyl-L-lysyl-[protein] + holo-[ACP] + H(+). Its pathway is protein modification; protein lipoylation via endogenous pathway; protein N(6)-(lipoyl)lysine from octanoyl-[acyl-carrier-protein]: step 1/2. Catalyzes the transfer of endogenously produced octanoic acid from octanoyl-acyl-carrier-protein onto the lipoyl domains of lipoate-dependent enzymes. Lipoyl-ACP can also act as a substrate although octanoyl-ACP is likely to be the physiological substrate. In Sodalis glossinidius (strain morsitans), this protein is Octanoyltransferase.